We begin with the raw amino-acid sequence, 84 residues long: Acyl carrier protein (84 aa).

The 76-residue stretch at 6–81 folds into the Carrier domain; the sequence is EEILTGLAEI…DAVDYIANAT (76 aa). S41 is modified (O-(pantetheine 4'-phosphoryl)serine).

It belongs to the acyl carrier protein (ACP) family. 4'-phosphopantetheine is transferred from CoA to a specific serine of apo-ACP by AcpS. This modification is essential for activity because fatty acids are bound in thioester linkage to the sulfhydryl of the prosthetic group.

The protein localises to the cytoplasm. It functions in the pathway lipid metabolism; fatty acid biosynthesis. Functionally, carrier of the growing fatty acid chain in fatty acid biosynthesis. This Acidothermus cellulolyticus (strain ATCC 43068 / DSM 8971 / 11B) protein is Acyl carrier protein.